The chain runs to 830 residues: Leucine--tRNA ligase (830 aa).

The 'HIGH' region motif lies at 48–58; that stretch reads PYPSGAIHMGH. The 'KMSKS' region signature appears at 596–600; it reads KMSKS. K599 contacts ATP.

The protein belongs to the class-I aminoacyl-tRNA synthetase family.

It is found in the cytoplasm. The enzyme catalyses tRNA(Leu) + L-leucine + ATP = L-leucyl-tRNA(Leu) + AMP + diphosphate. This chain is Leucine--tRNA ligase, found in Helicobacter hepaticus (strain ATCC 51449 / 3B1).